Here is a 142-residue protein sequence, read N- to C-terminus: Glia maturation factor beta (142 aa).

Residue Ser-2 is modified to N-acetylserine. The 136-residue stretch at 4 to 139 folds into the ADF-H domain; it reads SLVVCDVAED…TEEWLREKLG (136 aa).

The protein belongs to the actin-binding proteins ADF family. GMF subfamily. Post-translationally, phosphorylated; stimulated by phorbol ester.

This protein causes differentiation of brain cells, stimulation of neural regeneration, and inhibition of proliferation of tumor cells. This is Glia maturation factor beta (Gmfb) from Mus musculus (Mouse).